The following is a 3253-amino-acid chain: tRNA nuclease CdiA (3253 aa).

Residues 1–32 (MHQPPVRFPYRLLSYLISTIIAGQPLLPAVGA) form the signal peptide. Residues 36–322 (PQNGAGMDKA…AGGNLSVTGT (287 aa)) are two-partner system transport domain (TPS). The interval 351–1384 (GELTAGQNAM…ITIRTGHLLN (1034 aa)) is FHA-1. Positions 1385 to 1656 (QREGINETKS…DLASGIVEGN (272 aa)) are receptor binding domain (RBD). The segment at 1657-1841 (YPLPSGNNGY…LSPKDVTLQN (185 aa)) is YP domain. Residues 1842–1902 (GSIISGQNVH…GLKAMGDINN (61 aa)) form a periplasmic FHA-1 repeat (pFR) region. Residues 1944–2548 (TYTGSIASVS…TSKYDSKQTS (605 aa)) form an FHA-2 region. Disordered stretches follow at residues 2228-2252 (GSSK…TIGS), 2362-2410 (TGDP…GKNR), 2483-2503 (GSEK…GKTV), and 2687-2712 (IRDR…DSIS). 3 stretches are compositionally biased toward polar residues: residues 2240–2252 (GTTQ…TIGS), 2368–2403 (TGVS…NLSV), and 2490–2503 (TEWT…GKTV). Residues 2888 to 2930 (SDLSEEQKQTISTLATVSAGLAGGLTGNSSASAAVGAQSGKNA) are pretoxin (PT) domain. The short motif at 2931–2934 (VDNN) is the VDNN CT cleavage motif element. The interval 2931–3253 (VDNNYLSVSE…TGIVSNFHPK (323 aa)) is C-terminal effector domain (CT).

In the N-terminal section; belongs to the CdiA toxin family. This sequence in the C-terminal section; belongs to the bacterial EndoU family. In terms of assembly, forms a 1:1 complex with cognate immunity protein CdiI-STECO31. TRNase activity is metal-independent. serves as cofactor. The CT domain is cleaved upon binding to receptor Tsx on target cells.

The protein localises to the secreted. It is found in the target cell. The protein resides in the target cell cytoplasm. Its function is as follows. Toxic component of a toxin-immunity protein module, which functions as a cellular contact-dependent growth inhibition (CDI) system. CDI modules allow bacteria to communicate with and inhibit the growth of closely related neighboring target bacteria in a contact-dependent fashion (target cell counts decrease 1000- to 10000-fold with this CDI). Uses outer membrane nucleoside transporter Tsx on target cells as a receptor. Gains access to the cytoplasm of target cells by using integral inner membrane protein PTS system glucose-specific EIICB component (ptsG). Targeting of the C-terminal domain (CT) domain (residues 2931-3253) in the absence of immunity protein inhibits cell growth and causes tRNA(UUC-Glu) cleavage; expression of cognate immunity protein CdiI-STECO31 neutralizes growth inhibition leaving tRNA(UUC-Glu) is intact, whereas non-cognate immunity proteins do not confer protection. The CT domain cleaves tRNA; it is most active against tRNA(UUC-Glu), but also has modest activity against tRNA(GUC-Asp), tRNA(UUG-Gln), tRNA(CCC-Gly), tRNA(UCC-Gly), tRNA(GCC-Gly), tRNA(UUU-Lys), tRNA(GGU-Thr) and tRNA(CCA-Trp); tRNA cleavage is inhibited by cognate immunity protein CdiI. Cleavage of tRNA(UUC-Glu) occurs in the anticodon loop between cytosine(37) and 2-methyladenosine(38) (C37-m2A38) and probably also occurs in the anticodon loop of other tRNAs as well. In terms of biological role, the CdiA protein is thought to be exported from the cell through the central lumen of CdiB, the other half of its two-partner system (TPS). The TPS domain probably remains associated with CdiB while the FHA-1 domain forms an extended filament (33 nm long) with the receptor-binding domain (RBD) at its extremity; in the secretion arrested state the C-terminus of the RBD and YP domains form a hairpin-like structure as the FHA-2, PT and CT domains are periplasmic. The YP domain is probably responsible for this arrest at the point where it re-enters the host cell periplasm. Upon binding to a target cell outer membrane receptor (Tsx for this CDI) a signal is transmitted to activate secretion. The filament becomes about 5 nm longer, the rest of CdiA is secreted and the FHA-2 domain becomes stably associated with the target cell's outer membrane where it facilitates entry of the toxic CT domain into the target cell periplasm. From there the toxic CT domain is cleaved and gains access to the target cell cytoplasm via an inner membrane protein (PTS system glucose-specific EIICB component, ptsG for this CDI). This Escherichia coli (strain STEC_O31) protein is tRNA nuclease CdiA.